The following is a 539-amino-acid chain: Tetracenomycin B2 monooxygenase-dioxygenase (539 aa).

FAD-binding residues include leucine 15, glutamate 35, glutamine 128, and leucine 152. Catalysis depends on tyrosine 231, which acts as the Proton acceptor. An FAD-binding site is contributed by aspartate 313.

It belongs to the PheA/TfdB FAD monooxygenase family. FAD serves as cofactor.

The enzyme catalyses tetracenomycin B2 + 2 NADPH + 2 O2 + 2 H(+) = 8-demethyltetracenomycin C + 2 NADP(+) + H2O. It carries out the reaction tetracenomycin A2 + 2 NADPH + 2 O2 + 2 H(+) = tetracenomycin C + 2 NADP(+) + H2O. The protein operates within antibiotic biosynthesis. Its function is as follows. Involved in the biosynthesis of elloramycin, an antitumor polyketide. In vivo, probably catalyzes the triple hydroxylation of 8-demethyltetracenomycin A2 (tetracenomycin B2) at positions C-4, C-4a and C-12a to give 8-demethyltetracenomycin C (8-DMTC). In vitro, catalyzes the triple hydroxylation of tetracenomycin A2 (TCM A2) to give tetracenomycin C (TCM C). Uses NADPH as an electron donor and requires molecular O(2). This chain is Tetracenomycin B2 monooxygenase-dioxygenase, found in Streptomyces olivaceus.